Here is a 368-residue protein sequence, read N- to C-terminus: Transaldolase (368 aa).

Lys140 serves as the catalytic Schiff-base intermediate with substrate.

Belongs to the transaldolase family. Type 2 subfamily.

The protein resides in the cytoplasm. It catalyses the reaction D-sedoheptulose 7-phosphate + D-glyceraldehyde 3-phosphate = D-erythrose 4-phosphate + beta-D-fructose 6-phosphate. Its pathway is carbohydrate degradation; pentose phosphate pathway; D-glyceraldehyde 3-phosphate and beta-D-fructose 6-phosphate from D-ribose 5-phosphate and D-xylulose 5-phosphate (non-oxidative stage): step 2/3. Its function is as follows. Transaldolase is important for the balance of metabolites in the pentose-phosphate pathway. The polypeptide is Transaldolase (Kocuria rhizophila (strain ATCC 9341 / DSM 348 / NBRC 103217 / DC2201)).